We begin with the raw amino-acid sequence, 74 residues long: Antimicrobial peptide HsAp4 (74 aa).

Positions 1–21 are cleaved as a signal peptide; it reads MSRRRILILVLVTMLVKTMAG. Positions 22-33 are excised as a propeptide; the sequence is MESKWVETTYEI. Arg65 carries the post-translational modification Arginine amide. A propeptide spanning residues 69 to 74 is cleaved from the precursor; the sequence is AISEQT.

Belongs to the non-disulfide-bridged peptide (NDBP) superfamily. Medium-length antimicrobial peptide (group 3) family. As to expression, expressed by the venom gland.

It localises to the secreted. The protein resides in the target cell membrane. In terms of biological role, possesses antimicrobial activity against both Gram-negative and Gram-positive bacteria, as well as against the fungus C.tropicalis. Also possesses a relatively high hemolytic activity. May act by disrupting the integrity of the bacterial cell membrane. The chain is Antimicrobial peptide HsAp4 from Heterometrus spinifer (Asia giant forest scorpion).